We begin with the raw amino-acid sequence, 192 residues long: Adenylate kinase (192 aa).

10–18 is a binding site for ATP; that stretch reads GVPGVGGTT.

The protein belongs to the archaeal adenylate kinase family. As to quaternary structure, monomer.

The protein localises to the cytoplasm. It catalyses the reaction AMP + ATP = 2 ADP. The protein is Adenylate kinase of Methanococcus maripaludis (strain C5 / ATCC BAA-1333).